Consider the following 312-residue polypeptide: Isethionate sulfite-lyase activating enzyme (312 aa).

Positions 22–309 (HDGPGIRTIV…VDETRGAVTE (288 aa)) constitute a Radical SAM core domain. [4Fe-4S] cluster is bound by residues C36, C40, C43, C62, C65, C68, C72, C92, C95, C100, and C104. 42–44 (WCS) contributes to the S-adenosyl-L-methionine binding site. 4Fe-4S ferredoxin-type domains lie at 53–82 (PQVA…VNED) and 83–115 (GTLS…YGEN). Residues G144, 193–195 (DVK), and H267 each bind S-adenosyl-L-methionine.

The protein belongs to the organic radical-activating enzymes family. As to quaternary structure, monomer. [4Fe-4S] cluster is required as a cofactor.

It catalyses the reaction glycyl-[protein] + reduced [flavodoxin] + S-adenosyl-L-methionine = glycin-2-yl radical-[protein] + semiquinone [flavodoxin] + 5'-deoxyadenosine + L-methionine + H(+). It functions in the pathway organosulfur degradation; alkanesulfonate degradation. In terms of biological role, involved in an anaerobic respiration pathway that converts the sulfonate taurine (2-aminoethanesulfonate) to ammonia, acetate and sulfide. Catalyzes activation of the isethionate sulfite-lyase IslA under anaerobic conditions by generation of an organic free radical on a glycine residue, via a homolytic cleavage of S-adenosyl-L-methionine (SAM). This chain is Isethionate sulfite-lyase activating enzyme, found in Bilophila wadsworthia (strain 3_1_6).